Consider the following 361-residue polypeptide: Phospho-N-acetylmuramoyl-pentapeptide-transferase (361 aa).

The next 10 helical transmembrane spans lie at 26-46 (AGGA…CIIE), 71-91 (TPTM…FLWA), 97-117 (FILW…CDDY), 134-154 (IFGQ…FPSN), 168-188 (GFFI…IVGS), 200-220 (GLAI…AYFA), 236-256 (GAGE…GFLW), 264-284 (IFMG…VSLF), 290-310 (VLVL…IQIF), and 338-358 (KVTV…FASL).

This sequence belongs to the glycosyltransferase 4 family. MraY subfamily. It depends on Mg(2+) as a cofactor.

It localises to the cell membrane. It catalyses the reaction UDP-N-acetyl-alpha-D-muramoyl-L-alanyl-gamma-D-glutamyl-meso-2,6-diaminopimeloyl-D-alanyl-D-alanine + di-trans,octa-cis-undecaprenyl phosphate = di-trans,octa-cis-undecaprenyl diphospho-N-acetyl-alpha-D-muramoyl-L-alanyl-D-glutamyl-meso-2,6-diaminopimeloyl-D-alanyl-D-alanine + UMP. The protein operates within cell wall biogenesis; peptidoglycan biosynthesis. Its function is as follows. Catalyzes the initial step of the lipid cycle reactions in the biosynthesis of the cell wall peptidoglycan: transfers peptidoglycan precursor phospho-MurNAc-pentapeptide from UDP-MurNAc-pentapeptide onto the lipid carrier undecaprenyl phosphate, yielding undecaprenyl-pyrophosphoryl-MurNAc-pentapeptide, known as lipid I. This chain is Phospho-N-acetylmuramoyl-pentapeptide-transferase, found in Endomicrobium trichonymphae.